Reading from the N-terminus, the 384-residue chain is S-adenosylmethionine synthase (384 aa).

Histidine 16 is a binding site for ATP. Aspartate 18 contributes to the Mg(2+) binding site. Residue glutamate 44 coordinates K(+). L-methionine is bound by residues glutamate 57 and glutamine 100. Positions glutamine 100 to glutamate 110 are flexible loop. ATP-binding positions include aspartate 165–lysine 167, aspartate 240, arginine 246–lysine 247, alanine 263, and lysine 267. Aspartate 240 contacts L-methionine. L-methionine is bound at residue lysine 271.

The protein belongs to the AdoMet synthase family. As to quaternary structure, homotetramer; dimer of dimers. It depends on Mg(2+) as a cofactor. The cofactor is K(+).

The protein resides in the cytoplasm. The enzyme catalyses L-methionine + ATP + H2O = S-adenosyl-L-methionine + phosphate + diphosphate. Its pathway is amino-acid biosynthesis; S-adenosyl-L-methionine biosynthesis; S-adenosyl-L-methionine from L-methionine: step 1/1. Catalyzes the formation of S-adenosylmethionine (AdoMet) from methionine and ATP. The overall synthetic reaction is composed of two sequential steps, AdoMet formation and the subsequent tripolyphosphate hydrolysis which occurs prior to release of AdoMet from the enzyme. The chain is S-adenosylmethionine synthase from Cellvibrio japonicus (strain Ueda107) (Pseudomonas fluorescens subsp. cellulosa).